A 450-amino-acid polypeptide reads, in one-letter code: Na(+)/H(+) antiporter NhaA (450 aa).

Transmembrane regions (helical) follow at residues 24-44 (FFAIEASSGILLMAATVLALV), 75-95 (LILWINDGLMAIFFFVVGLEI), 111-131 (ALPIAAAIGGMLVPAGIYLAL), 140-160 (GWGVPMATDIAFALGILSLLG), 169-189 (VFLTAVAIVDDLGAILVIAFF), 196-216 (FSFLMLGFAAFAVMLLLNWLG), 224-244 (LLVGLVLWFALLKSGVHATIA), 318-338 (WVAWFIMPVFALANAGVTVSA), 352-372 (IFFGLLLGKQGGVTLAVWLLV), 390-410 (GIGWLAGIGFTMAIFIATLAF), and 422-442 (SILCASFVAGFGGYMLMRVLL).

It belongs to the NhaA Na(+)/H(+) (TC 2.A.33) antiporter family.

It is found in the cell inner membrane. The enzyme catalyses Na(+)(in) + 2 H(+)(out) = Na(+)(out) + 2 H(+)(in). Functionally, na(+)/H(+) antiporter that extrudes sodium in exchange for external protons. The chain is Na(+)/H(+) antiporter NhaA from Oleidesulfovibrio alaskensis (strain ATCC BAA-1058 / DSM 17464 / G20) (Desulfovibrio alaskensis).